A 175-amino-acid chain; its full sequence is ATP synthase subunit b (175 aa).

The chain crosses the membrane as a helical span at residues 20–40 (LIFWTAVTFVIVLVILKKIAW).

It belongs to the ATPase B chain family. As to quaternary structure, F-type ATPases have 2 components, F(1) - the catalytic core - and F(0) - the membrane proton channel. F(1) has five subunits: alpha(3), beta(3), gamma(1), delta(1), epsilon(1). F(0) has four main subunits: a(1), b(2) and c(10-14). The alpha and beta chains form an alternating ring which encloses part of the gamma chain. F(1) is attached to F(0) by a central stalk formed by the gamma and epsilon chains, while a peripheral stalk is formed by the delta and b chains.

Its subcellular location is the cell inner membrane. Its function is as follows. F(1)F(0) ATP synthase produces ATP from ADP in the presence of a proton or sodium gradient. F-type ATPases consist of two structural domains, F(1) containing the extramembraneous catalytic core and F(0) containing the membrane proton channel, linked together by a central stalk and a peripheral stalk. During catalysis, ATP synthesis in the catalytic domain of F(1) is coupled via a rotary mechanism of the central stalk subunits to proton translocation. Component of the F(0) channel, it forms part of the peripheral stalk, linking F(1) to F(0). The protein is ATP synthase subunit b of Chlorobaculum parvum (strain DSM 263 / NCIMB 8327) (Chlorobium vibrioforme subsp. thiosulfatophilum).